A 601-amino-acid chain; its full sequence is Elongation factor 4 (601 aa).

The region spanning 6–188 (KNIRNFSIIA…QIIKKIPAPD (183 aa)) is the tr-type G domain. Residues 18 to 23 (DHGKST) and 135 to 138 (NKID) contribute to the GTP site.

Belongs to the TRAFAC class translation factor GTPase superfamily. Classic translation factor GTPase family. LepA subfamily.

The protein localises to the cell membrane. It catalyses the reaction GTP + H2O = GDP + phosphate + H(+). Required for accurate and efficient protein synthesis under certain stress conditions. May act as a fidelity factor of the translation reaction, by catalyzing a one-codon backward translocation of tRNAs on improperly translocated ribosomes. Back-translocation proceeds from a post-translocation (POST) complex to a pre-translocation (PRE) complex, thus giving elongation factor G a second chance to translocate the tRNAs correctly. Binds to ribosomes in a GTP-dependent manner. The sequence is that of Elongation factor 4 from Buchnera aphidicola subsp. Schizaphis graminum (strain Sg).